The chain runs to 331 residues: Pyruvate synthase subunit PorB (331 aa).

[4Fe-4S] cluster is bound by residues C21, C24, C59, and C222.

Heterotetramer of one alpha, one beta, one delta and one gamma chain. Requires [4Fe-4S] cluster as cofactor.

The catalysed reaction is 2 oxidized [2Fe-2S]-[ferredoxin] + pyruvate + CoA = 2 reduced [2Fe-2S]-[ferredoxin] + acetyl-CoA + CO2 + H(+). The polypeptide is Pyruvate synthase subunit PorB (porB) (Pyrococcus furiosus (strain ATCC 43587 / DSM 3638 / JCM 8422 / Vc1)).